The chain runs to 70 residues: MPRLPPILRLLQAPAKFTVVPKAHVSAKPAKTPTSAVEQAVGISAIVVGFMVPAGWVLAHLESYKKSSAA.

A mitochondrion-targeting transit peptide spans 1–24; the sequence is MPRLPPILRLLQAPAKFTVVPKAH. Over 25 to 38 the chain is Mitochondrial matrix; the sequence is VSAKPAKTPTSAVE. The chain crosses the membrane as a helical span at residues 39–60; sequence QAVGISAIVVGFMVPAGWVLAH. The Mitochondrial intermembrane segment spans residues 61-70; that stretch reads LESYKKSSAA.

This sequence belongs to the cytochrome c oxidase VIII family. In terms of assembly, component of the cytochrome c oxidase (complex IV, CIV), a multisubunit enzyme composed of 14 subunits. The complex is composed of a catalytic core of 3 subunits MT-CO1, MT-CO2 and MT-CO3, encoded in the mitochondrial DNA, and 11 supernumerary subunits COX4I, COX5A, COX5B, COX6A, COX6B, COX6C, COX7A, COX7B, COX7C, COX8 and NDUFA4, which are encoded in the nuclear genome. The complex exists as a monomer or a dimer and forms supercomplexes (SCs) in the inner mitochondrial membrane with NADH-ubiquinone oxidoreductase (complex I, CI) and ubiquinol-cytochrome c oxidoreductase (cytochrome b-c1 complex, complex III, CIII), resulting in different assemblies (supercomplex SCI(1)III(2)IV(1) and megacomplex MCI(2)III(2)IV(2)).

Its subcellular location is the mitochondrion inner membrane. Its pathway is energy metabolism; oxidative phosphorylation. Functionally, component of the cytochrome c oxidase, the last enzyme in the mitochondrial electron transport chain which drives oxidative phosphorylation. The respiratory chain contains 3 multisubunit complexes succinate dehydrogenase (complex II, CII), ubiquinol-cytochrome c oxidoreductase (cytochrome b-c1 complex, complex III, CIII) and cytochrome c oxidase (complex IV, CIV), that cooperate to transfer electrons derived from NADH and succinate to molecular oxygen, creating an electrochemical gradient over the inner membrane that drives transmembrane transport and the ATP synthase. Cytochrome c oxidase is the component of the respiratory chain that catalyzes the reduction of oxygen to water. Electrons originating from reduced cytochrome c in the intermembrane space (IMS) are transferred via the dinuclear copper A center (CU(A)) of subunit 2 and heme A of subunit 1 to the active site in subunit 1, a binuclear center (BNC) formed by heme A3 and copper B (CU(B)). The BNC reduces molecular oxygen to 2 water molecules using 4 electrons from cytochrome c in the IMS and 4 protons from the mitochondrial matrix. The chain is Cytochrome c oxidase subunit 8B, mitochondrial (Cox8b) from Mus musculus (Mouse).